Reading from the N-terminus, the 286-residue chain is MKKVLGIYGNANRHWVGDGFPVRSLFSYNTLGQHISPFLLLDYAGPADFPPAQQRRGVGQHPHRGFETVTIVYQGEVEHHDSTGAGGRIGPGDVQWMTAASGILHEEYHSERFRSTGGTLEMVQLWVNLPSSDKMNPPRYQTLLDADIPRVGLPDRAGELRVIAGRYGRHQGPALTHSPLAVWDVQLKAGKHLALDLPKGHTCAVVVLRGTLAVGDEIVREAQVALLDRDDPRLELEANNDVQLLVLSGEPLDEPIIGYGPFVMSSREEIDQAIEDFENGRFIRAH.

Residues H61, H63, H105, and E107 each contribute to the a divalent metal cation site.

This sequence belongs to the pirin family. A divalent metal cation serves as cofactor.

It carries out the reaction quercetin + O2 = 2-(3,4-dihydroxybenzoyloxy)-4,6-dihydroxybenzoate + CO. It participates in flavonoid metabolism; quercetin degradation. In terms of biological role, putative quercetin 2,3-dioxygenase. In Pseudomonas aeruginosa (strain ATCC 15692 / DSM 22644 / CIP 104116 / JCM 14847 / LMG 12228 / 1C / PRS 101 / PAO1), this protein is Putative quercetin 2,3-dioxygenase PA2418.